Consider the following 529-residue polypeptide: Peptide chain release factor 3 (529 aa).

Residues 11 to 280 enclose the tr-type G domain; it reads AKRRTFAIIS…GLVEWAPAPM (270 aa). GTP-binding positions include 20–27, 88–92, and 142–145; these read SHPDAGKT, DTPGH, and NKLD.

Belongs to the TRAFAC class translation factor GTPase superfamily. Classic translation factor GTPase family. PrfC subfamily.

It localises to the cytoplasm. Increases the formation of ribosomal termination complexes and stimulates activities of RF-1 and RF-2. It binds guanine nucleotides and has strong preference for UGA stop codons. It may interact directly with the ribosome. The stimulation of RF-1 and RF-2 is significantly reduced by GTP and GDP, but not by GMP. This chain is Peptide chain release factor 3, found in Yersinia pseudotuberculosis serotype O:1b (strain IP 31758).